We begin with the raw amino-acid sequence, 293 residues long: Phosphatidylserine decarboxylase proenzyme (293 aa).

Residues Asp-88, His-144, and Ser-247 each act as charge relay system; for autoendoproteolytic cleavage activity in the active site. Ser-247 acts as the Schiff-base intermediate with substrate; via pyruvic acid; for decarboxylase activity in catalysis. At Ser-247 the chain carries Pyruvic acid (Ser); by autocatalysis.

This sequence belongs to the phosphatidylserine decarboxylase family. PSD-B subfamily. Prokaryotic type I sub-subfamily. As to quaternary structure, heterodimer of a large membrane-associated beta subunit and a small pyruvoyl-containing alpha subunit. It depends on pyruvate as a cofactor. In terms of processing, is synthesized initially as an inactive proenzyme. Formation of the active enzyme involves a self-maturation process in which the active site pyruvoyl group is generated from an internal serine residue via an autocatalytic post-translational modification. Two non-identical subunits are generated from the proenzyme in this reaction, and the pyruvate is formed at the N-terminus of the alpha chain, which is derived from the carboxyl end of the proenzyme. The autoendoproteolytic cleavage occurs by a canonical serine protease mechanism, in which the side chain hydroxyl group of the serine supplies its oxygen atom to form the C-terminus of the beta chain, while the remainder of the serine residue undergoes an oxidative deamination to produce ammonia and the pyruvoyl prosthetic group on the alpha chain. During this reaction, the Ser that is part of the protease active site of the proenzyme becomes the pyruvoyl prosthetic group, which constitutes an essential element of the active site of the mature decarboxylase.

The protein resides in the cell membrane. The enzyme catalyses a 1,2-diacyl-sn-glycero-3-phospho-L-serine + H(+) = a 1,2-diacyl-sn-glycero-3-phosphoethanolamine + CO2. It participates in phospholipid metabolism; phosphatidylethanolamine biosynthesis; phosphatidylethanolamine from CDP-diacylglycerol: step 2/2. Functionally, catalyzes the formation of phosphatidylethanolamine (PtdEtn) from phosphatidylserine (PtdSer). In Xylella fastidiosa (strain M12), this protein is Phosphatidylserine decarboxylase proenzyme.